The sequence spans 126 residues: MTGYFLPPQTSSYTFRFAKVDDSAILSVGGDVAFGCCAQEQPPITSTNFTINGIKPWQGRLPDNIAGTVYMYAGFYCPMKIVYSNAVSWHTLPVSVELPDVTTVSDDFAGHVYSFDDDLTAQLYYP.

One can recognise a PA14 domain in the interval 1-110; that stretch reads MTGYFLPPQT…VTTVSDDFAG (110 aa).

The protein belongs to the flocculin family.

In Saccharomyces cerevisiae (strain ATCC 204508 / S288c) (Baker's yeast), this protein is Topoisomerase I damage affected protein 8 (TDA8).